The following is a 316-amino-acid chain: Mitochondrial distribution and morphology protein 12 (316 aa).

The 312-residue stretch at 1 to 312 (MSIDLEWNGL…FPNFHTLVLG (312 aa)) folds into the SMP-LTD domain.

Belongs to the MDM12 family. In terms of assembly, component of the ER-mitochondria encounter structure (ERMES) or MDM complex, composed of MMM1, MDM10, MDM12 and MDM34. An MMM1 homodimer associates with one molecule of MDM12 on each side in a pairwise head-to-tail manner, and the SMP-LTD domains of MMM1 and MDM12 generate a continuous hydrophobic tunnel for phospholipid trafficking.

It is found in the mitochondrion outer membrane. It localises to the endoplasmic reticulum membrane. Functionally, component of the ERMES/MDM complex, which serves as a molecular tether to connect the endoplasmic reticulum (ER) and mitochondria. Components of this complex are involved in the control of mitochondrial shape and protein biogenesis, and function in nonvesicular lipid trafficking between the ER and mitochondria. MDM12 is required for the interaction of the ER-resident membrane protein MMM1 and the outer mitochondrial membrane-resident beta-barrel protein MDM10. The MDM12-MMM1 subcomplex functions in the major beta-barrel assembly pathway that is responsible for biogenesis of all mitochondrial outer membrane beta-barrel proteins, and acts in a late step after the SAM complex. The MDM10-MDM12-MMM1 subcomplex further acts in the TOM40-specific pathway after the action of the MDM12-MMM1 complex. Essential for establishing and maintaining the structure of mitochondria and maintenance of mtDNA nucleoids. This Postia placenta (strain ATCC 44394 / Madison 698-R) (Brown rot fungus) protein is Mitochondrial distribution and morphology protein 12.